The sequence spans 444 residues: Pineal opsin (444 aa).

Residues 1–20 form a disordered region; that stretch reads MDALQESPPSHHSLPSALPS. Residues 1 to 46 are Extracellular-facing; the sequence is MDALQESPPSHHSLPSALPSATGGNGTVATMHNPFERPLEGIAPWN. Low complexity predominate over residues 7-20; it reads SPPSHHSLPSALPS. A glycan (N-linked (GlcNAc...) asparagine) is linked at asparagine 25. A helical transmembrane segment spans residues 47-71; sequence FTMLAALMGTITALSLGENFAVIVV. Residues 72–83 are Cytoplasmic-facing; it reads TARFRQLRQPLN. A helical transmembrane segment spans residues 84–108; it reads YVLVNLAAADLLVSAIGGSVSFFTN. The Extracellular segment spans residues 109 to 123; sequence IKGYFFLGVHACVLE. Cysteines 120 and 197 form a disulfide. The chain crosses the membrane as a helical span at residues 124–143; it reads GFAVTYFGVVALWSLALLAF. The Cytoplasmic portion of the chain corresponds to 144-162; it reads ERYFVICRPLGNFRLQSKH. Residues 163-186 form a helical membrane-spanning segment; that stretch reads AVLGLAVVWVFSLACTLPPVLGWS. Over 187–210 the chain is Extracellular; that stretch reads SYRPSMIGTTCEPNWYSGELHDHT. A helical membrane pass occupies residues 211-238; sequence FILMFFSTCFIFPLAVIFFSYGKLIQKL. Residues 239–260 lie on the Cytoplasmic side of the membrane; sequence KKASETQRGLESTRRAEQQVTR. Residues 261–284 form a helical membrane-spanning segment; it reads MVVVMILAFLVCWMPYATFSIVVT. The Extracellular portion of the chain corresponds to 285–292; the sequence is ACPTIHLD. The chain crosses the membrane as a helical span at residues 293-317; it reads PLLAAVPAFFSKTATVYNPVIYIFM. Position 304 is an N6-(retinylidene)lysine (lysine 304). At 318–444 the chain is on the cytoplasmic side; it reads NKQFRDCFVQ…SESVSKICPV (127 aa). Cysteine 331 is lipidated: S-palmitoyl cysteine. Disordered stretches follow at residues 341–360 and 388–420; these read QTAG…QSPG and EPTM…QQGT. A compositionally biased stretch (low complexity) spans 409–419; that stretch reads QQQGQQQQQQG.

Belongs to the G-protein coupled receptor 1 family. Opsin subfamily. Phosphorylated on some or all of the serine and threonine residues present in the C-terminal region. In terms of tissue distribution, pineal gland.

The protein resides in the membrane. In Petromyzon marinus (Sea lamprey), this protein is Pineal opsin.